We begin with the raw amino-acid sequence, 450 residues long: Carbamoyl phosphate synthase arginine-specific small chain (450 aa).

A mitochondrion-targeting transit peptide spans 1-29 (MFAARLFKAMPARASAFPSVNASIQSRFM). In terms of domain architecture, Glutamine amidotransferase type-1 spans 220–407 (HVAVIDCGVK…LDSVRKYKAS (188 aa)). The Nucleophile role is filled by cysteine 296. Catalysis depends on residues histidine 380 and glutamate 382.

This sequence belongs to the CarA family. As to quaternary structure, heterodimer composed of 2 chains; the small (or glutamine) chain promotes the hydrolysis of glutamine to ammonia, which is used by the large (or ammonia) chain to synthesize carbamoyl phosphate.

The protein resides in the mitochondrion matrix. It carries out the reaction hydrogencarbonate + L-glutamine + 2 ATP + H2O = carbamoyl phosphate + L-glutamate + 2 ADP + phosphate + 2 H(+). The catalysed reaction is L-glutamine + H2O = L-glutamate + NH4(+). The protein operates within amino-acid biosynthesis; L-arginine biosynthesis; carbamoyl phosphate from bicarbonate: step 1/1. Small subunit of the arginine-specific carbamoyl phosphate synthase (CPSase). CPSase catalyzes the formation of carbamoyl phosphate from the ammonia moiety of glutamine, carbonate, and phosphate donated by ATP, the first step of the arginine biosynthetic pathway. The small subunit (glutamine amidotransferase) binds and cleaves glutamine to supply the large subunit with the substrate ammonia. This is Carbamoyl phosphate synthase arginine-specific small chain (cpa1) from Aspergillus oryzae (strain ATCC 42149 / RIB 40) (Yellow koji mold).